An 80-amino-acid polypeptide reads, in one-letter code: Homeobox protein 7 (80 aa).

The segment at residues 8 to 67 (SNIRNIRSSGISTKKLEDFFSINQYPNKNEIKDFANYYQCDETKIKNWFKGKRDRLKKKS) is a DNA-binding region (homeobox). Residues 60–80 (RDRLKKKSSNNEKSGNKFYFK) are disordered. The span at 70–80 (NEKSGNKFYFK) shows a compositional bias: low complexity.

Its subcellular location is the nucleus. In terms of biological role, putative transcription factor. The chain is Homeobox protein 7 (hbx7) from Dictyostelium discoideum (Social amoeba).